The following is a 314-amino-acid chain: Homoserine O-acetyltransferase (314 aa).

Cysteine 142 acts as the Acyl-thioester intermediate in catalysis. Positions 163 and 192 each coordinate substrate. Histidine 235 functions as the Proton acceptor in the catalytic mechanism. Glutamate 237 is an active-site residue. A substrate-binding site is contributed by arginine 249.

This sequence belongs to the MetA family.

The protein localises to the cytoplasm. The enzyme catalyses L-homoserine + acetyl-CoA = O-acetyl-L-homoserine + CoA. The protein operates within amino-acid biosynthesis; L-methionine biosynthesis via de novo pathway; O-acetyl-L-homoserine from L-homoserine: step 1/1. Transfers an acetyl group from acetyl-CoA to L-homoserine, forming acetyl-L-homoserine. The sequence is that of Homoserine O-acetyltransferase from Streptococcus thermophilus (strain ATCC BAA-491 / LMD-9).